Reading from the N-terminus, the 295-residue chain is Uridine and thymidine phosphorylase (295 aa).

Phosphate contacts are provided by residues Arg-81 and 125–128 (RLGT). Residues Gln-203 and Arg-205 each coordinate substrate.

Belongs to the PNP/UDP phosphorylase family. In terms of tissue distribution, expressed in hypodermis, pharynx, spermatheca and gonad.

It catalyses the reaction uridine + phosphate = alpha-D-ribose 1-phosphate + uracil. The catalysed reaction is thymidine + phosphate = 2-deoxy-alpha-D-ribose 1-phosphate + thymine. It carries out the reaction 2'-deoxyuridine + phosphate = 2-deoxy-alpha-D-ribose 1-phosphate + uracil. The protein operates within pyrimidine metabolism; UMP biosynthesis via salvage pathway; uracil from uridine (phosphorylase route): step 1/1. Its pathway is pyrimidine metabolism; dTMP biosynthesis via salvage pathway; dTMP from thymine: step 1/2. In terms of biological role, catalyzes the reversible phosphorylytic cleavage of uridine and thymidine to uracil and ribose-phosphate or thymine and deoxyribose-1-phosphate. The produced molecules are then utilized as carbon and energy sources or in the rescue of pyrimidine bases for nucleotide synthesis. Required for normal lifespan. The protein is Uridine and thymidine phosphorylase of Caenorhabditis elegans.